The following is a 274-amino-acid chain: Sulfur carrier protein FdhD (274 aa).

Cys-120 acts as the Cysteine persulfide intermediate in catalysis.

It belongs to the FdhD family.

The protein resides in the cytoplasm. Its function is as follows. Required for formate dehydrogenase (FDH) activity. Acts as a sulfur carrier protein that transfers sulfur from IscS to the molybdenum cofactor prior to its insertion into FDH. This is Sulfur carrier protein FdhD from Burkholderia mallei (strain ATCC 23344).